Reading from the N-terminus, the 1214-residue chain is Myosin-1 (1214 aa).

Residues 1 to 21 (MAIIKRGARNKTAQEPAKRSA) form a disordered region. The Myosin motor domain maps to 36 to 715 (VGVSDLTLLS…TLFALEHMRD (680 aa)). 129 to 136 (GESGAGKT) lines the ATP pocket. Ser-357 is modified (phosphoserine). An actin-binding region spans residues 404 to 486 (SIGILDIYGF…PGIFAAMNDS (83 aa)). IQ domains follow at residues 719-739 (YNMAARIQRAWRRFLQRRIDS) and 740-765 (ATRIQRAIREKKGGNKYEKLRDEGSK). A TH1 domain is found at 771–961 (KERRTMSLLG…TILVRRGHPA (191 aa)). Disordered stretches follow at residues 926–1090 (KPGK…SELP), 1129–1177 (HQGG…AAAQ), and 1193–1214 (NKMRVESDGEDNGNDDDDDDDW). Basic residues predominate over residues 965-980 (QKKKPKKGKGHSKHHS). Composition is skewed to low complexity over residues 981 to 1000 (TSTSAPRSSVQSSQPSAPVS) and 1037 to 1057 (AAQPQATPQPAQVTQPQQKKV). Positions 1058-1067 (APPPPPPPPM) are enriched in pro residues. In terms of domain architecture, SH3 spans 1069 to 1131 (SSEPKYEAAY…PTNYVVKHQG (63 aa)). A compositionally biased stretch (low complexity) spans 1157 to 1177 (VSSSQSETATTATPASVAAAQ). The span at 1200-1214 (DGEDNGNDDDDDDDW) shows a compositional bias: acidic residues.

This sequence belongs to the TRAFAC class myosin-kinesin ATPase superfamily. Myosin family. Post-translationally, phosphorylation of the TEDS site (Ser-357) is required for the polarization of the actin cytoskeleton. Phosphorylation probably activates the myosin-I ATPase activity.

The protein resides in the cytoplasm. Its subcellular location is the cytoskeleton. The protein localises to the actin patch. Functionally, type-I myosin implicated in the organization of the actin cytoskeleton. Required for proper actin cytoskeleton polarization. At the cell cortex, assembles in patch-like structures together with proteins from the actin-polymerizing machinery and promotes actin assembly. Functions as actin nucleation-promoting factor (NPF) for the Arp2/3 complex. The polypeptide is Myosin-1 (MYO1) (Vanderwaltozyma polyspora (strain ATCC 22028 / DSM 70294 / BCRC 21397 / CBS 2163 / NBRC 10782 / NRRL Y-8283 / UCD 57-17) (Kluyveromyces polysporus)).